Reading from the N-terminus, the 666-residue chain is Zinc finger protein 710 (666 aa).

Residues K110 and K113 each participate in a glycyl lysine isopeptide (Lys-Gly) (interchain with G-Cter in SUMO2) cross-link. Positions K113–A141 are disordered. 3 consecutive C2H2-type zinc fingers follow at residues W297–H319, H325–H347, and H353–H375. Residue K379 forms a Glycyl lysine isopeptide (Lys-Gly) (interchain with G-Cter in SUMO2) linkage. C2H2-type zinc fingers lie at residues Y381–H403, H409–H431, Y437–H459, F465–H487, F493–H515, Y521–H543, F549–H571, and F577–H600.

It belongs to the krueppel C2H2-type zinc-finger protein family.

The protein localises to the nucleus. In terms of biological role, may be involved in transcriptional regulation. The sequence is that of Zinc finger protein 710 (Znf710) from Mus musculus (Mouse).